The primary structure comprises 630 residues: GATA-type transcription factor SRE1 (630 aa).

2 disordered regions span residues 1–139 (MTGL…TPLW) and 162–203 (DRPT…RLTD). 3 stretches are compositionally biased toward polar residues: residues 66-82 (DNTQ…QLQN), 115-133 (KAQS…NCGT), and 175-196 (YGSS…TNDG). The segment at 128–152 (CSNCGTKRTPLWRRSPTGATICNAC) adopts a GATA-type 1 zinc-finger fold. Residues 219–237 (CPGGGSCNGTGGAEGCDGC) form a cystein-rich region (CRR) region. The segment at 256–283 (HTPRTSPQVSTQGGPGSTEGDAGSSNPE) is disordered. Residues 258–267 (PRTSPQVSTQ) show a composition bias toward polar residues. Residues 291–315 (CQNCQTTVTPLWRRDENGHPICNAC) form a GATA-type 2 zinc finger. The tract at residues 339-609 (KRVVPAMREQ…AKAERRARLQ (271 aa)) is disordered. Over residues 349–363 (SPPSATQSSNGSVSP) the composition is skewed to polar residues. Composition is skewed to low complexity over residues 436-447 (NNHNNGETTNTH) and 492-503 (SSSSASFPNNNP). A compositionally biased stretch (polar residues) spans 504 to 513 (GRFNSISSLL). A compositionally biased stretch (low complexity) spans 558–568 (SHSPPRFSPSL). Over residues 595–609 (VDHRDAKAERRARLQ) the composition is skewed to basic and acidic residues. Positions 595–630 (VDHRDAKAERRARLQREAQDMREALKAKERELALLE) form a coiled coil.

It is found in the nucleus. Functionally, GATA-type transcription repressor that regulates iron- acquisition genes through specific binding the GATA sequence element 5'-(G/A)ATC(T/A)GATAA-3' of target promoters in an iron- and zinc-dependent manner. Regulation occurs via direct binding of iron ions. Iron acquisition regulation is critical for survival under both iron-limiting conditions (to acquire essential iron) and iron-replete conditions (to limit iron toxicity). SRE1 targets include genes encoding a number of key iron-regulated factors such as those involved in siderophore biosynthesis, presumed ferric reductase activity, iron-responsive transcriptional regulation, oxidative stress response, as well as genes encoding a number of putative oxidoreductases, metabolic and mitochondrial enzymes, superoxide dismutase, and genes previously identified as induced during nitrosative stress. This Ajellomyces capsulatus (Darling's disease fungus) protein is GATA-type transcription factor SRE1.